Here is a 234-residue protein sequence, read N- to C-terminus: Probable septum site-determining protein MinC (234 aa).

It belongs to the MinC family. As to quaternary structure, interacts with MinD and FtsZ.

In terms of biological role, cell division inhibitor that blocks the formation of polar Z ring septums. Rapidly oscillates between the poles of the cell to destabilize FtsZ filaments that have formed before they mature into polar Z rings. Prevents FtsZ polymerization. In Buchnera aphidicola subsp. Baizongia pistaciae (strain Bp), this protein is Probable septum site-determining protein MinC.